The following is a 351-amino-acid chain: Porphobilinogen deaminase (351 aa).

The residue at position 242 (cysteine 242) is an S-(dipyrrolylmethanemethyl)cysteine.

The protein belongs to the HMBS family. In terms of assembly, monomer. Requires dipyrromethane as cofactor.

The enzyme catalyses 4 porphobilinogen + H2O = hydroxymethylbilane + 4 NH4(+). It functions in the pathway porphyrin-containing compound metabolism; protoporphyrin-IX biosynthesis; coproporphyrinogen-III from 5-aminolevulinate: step 2/4. Tetrapolymerization of the monopyrrole PBG into the hydroxymethylbilane pre-uroporphyrinogen in several discrete steps. The polypeptide is Porphobilinogen deaminase (Rickettsia africae (strain ESF-5)).